The primary structure comprises 368 residues: Protein mab-21-like (368 aa).

This sequence belongs to the mab-21 family.

The chain is Protein mab-21-like from Drosophila pseudoobscura pseudoobscura (Fruit fly).